The following is a 212-amino-acid chain: Thymidylate kinase (212 aa).

An ATP-binding site is contributed by 10–17 (GPDGAGKT).

This sequence belongs to the thymidylate kinase family.

It carries out the reaction dTMP + ATP = dTDP + ADP. In terms of biological role, phosphorylation of dTMP to form dTDP in both de novo and salvage pathways of dTTP synthesis. The protein is Thymidylate kinase of Enterococcus faecalis (strain ATCC 700802 / V583).